A 159-amino-acid polypeptide reads, in one-letter code: Histone H2A (159 aa).

Residues 1-10 (MDSTGTGAGG) show a composition bias toward gly residues. Disordered stretches follow at residues 1 to 31 (MDST…SVSR) and 133 to 159 (KTAE…PKKA). 2 stretches are compositionally biased toward basic residues: residues 11–29 (KGKK…KKSV) and 149–159 (PKKAAKSPKKA). 2 short sequence motifs (SPKK motif) span residues 148–151 (SPKK) and 155–158 (SPKK).

The protein belongs to the histone H2A family. The nucleosome is a histone octamer containing two molecules each of H2A, H2B, H3 and H4 assembled in one H3-H4 heterotetramer and two H2A-H2B heterodimers. The octamer wraps approximately 147 bp of DNA.

It is found in the nucleus. The protein resides in the chromosome. Functionally, core component of nucleosome. Nucleosomes wrap and compact DNA into chromatin, limiting DNA accessibility to the cellular machineries which require DNA as a template. Histones thereby play a central role in transcription regulation, DNA repair, DNA replication and chromosomal stability. DNA accessibility is regulated via a complex set of post-translational modifications of histones, also called histone code, and nucleosome remodeling. In Zea mays (Maize), this protein is Histone H2A.